A 200-amino-acid chain; its full sequence is Small ribosomal subunit protein eS1 (200 aa).

Belongs to the eukaryotic ribosomal protein eS1 family.

This Thermococcus gammatolerans (strain DSM 15229 / JCM 11827 / EJ3) protein is Small ribosomal subunit protein eS1.